Here is an 889-residue protein sequence, read N- to C-terminus: Mitochondrial intermediate peptidase (889 aa).

The transit peptide at 1–30 directs the protein to the mitochondrion; the sequence is MASTSKNAQRAAASVAHSYHVCLARRMSRL. A disordered region spans residues 60–112; sequence SSSLAAQRVQRPTSAGPILTNPISDHEKDNDELRSLFDAPPTSSSANHLRSSG. Residues 83–94 are compositionally biased toward basic and acidic residues; sequence SDHEKDNDELRS. Residues 100–112 show a composition bias toward polar residues; that stretch reads PTSSSANHLRSSG. A Zn(2+)-binding site is contributed by His-670. Residue Glu-671 is part of the active site. Zn(2+)-binding residues include His-674 and His-677.

It belongs to the peptidase M3 family. Zn(2+) is required as a cofactor.

It is found in the mitochondrion matrix. The catalysed reaction is Release of an N-terminal octapeptide as second stage of processing of some proteins imported into the mitochondrion.. Cleaves proteins, imported into the mitochondrion, to their mature size. While most mitochondrial precursor proteins are processed to the mature form in one step by mitochondrial processing peptidase (MPP), the sequential cleavage by MIP of an octapeptide after initial processing by MPP is a required step for a subgroup of nuclear-encoded precursor proteins destined for the matrix or the inner membrane. This chain is Mitochondrial intermediate peptidase (OCT1), found in Mycosarcoma maydis (Corn smut fungus).